The sequence spans 656 residues: DNA ligase (656 aa).

NAD(+) is bound by residues 32-36 (DEEYD), 81-82 (SM), and glutamate 112. Catalysis depends on lysine 114, which acts as the N6-AMP-lysine intermediate. Residues arginine 135, glutamate 169, lysine 284, and lysine 308 each contribute to the NAD(+) site. Residues cysteine 402, cysteine 405, cysteine 418, and cysteine 423 each coordinate Zn(2+). Positions 577 to 656 (VQKTPFTGKT…DMWKMLKEGK (80 aa)) constitute a BRCT domain.

This sequence belongs to the NAD-dependent DNA ligase family. LigA subfamily. The cofactor is Mg(2+). Requires Mn(2+) as cofactor.

It carries out the reaction NAD(+) + (deoxyribonucleotide)n-3'-hydroxyl + 5'-phospho-(deoxyribonucleotide)m = (deoxyribonucleotide)n+m + AMP + beta-nicotinamide D-nucleotide.. DNA ligase that catalyzes the formation of phosphodiester linkages between 5'-phosphoryl and 3'-hydroxyl groups in double-stranded DNA using NAD as a coenzyme and as the energy source for the reaction. It is essential for DNA replication and repair of damaged DNA. In Nautilia profundicola (strain ATCC BAA-1463 / DSM 18972 / AmH), this protein is DNA ligase.